The sequence spans 736 residues: Catalase-1 (736 aa).

The segment at 1 to 29 is disordered; it reads MSNIISQAGQKAKEALTSAPSSKKVDDLK. Arg89 provides a ligand contact to heme. The active site involves His92. Arg129 serves as a coordination point for heme. Asn165 is a catalytic residue. The heme site is built by Phe178, Arg375, Tyr379, and Arg386. The segment at residues 356 to 379 is a cross-link (3-(S-cysteinyl)-tyrosine (Cys-Tyr)); sequence CTSHVVNGIGFSDDPLLQGRNFSY.

It belongs to the catalase family. As to quaternary structure, homotetramer. It depends on heme as a cofactor. Post-translationally, glycosylated; with alpha-glucose and/or alpha-mannose.

It localises to the secreted. The protein localises to the cell wall. It catalyses the reaction 2 H2O2 = O2 + 2 H2O. Its function is as follows. Occurs in almost all aerobically respiring organisms and serves to protect cells from the toxic effects of hydrogen peroxide. This chain is Catalase-1 (cat-1), found in Neurospora crassa (strain ATCC 24698 / 74-OR23-1A / CBS 708.71 / DSM 1257 / FGSC 987).